Consider the following 430-residue polypeptide: Tol-Pal system protein TolB (430 aa).

Positions 1 to 21 are cleaved as a signal peptide; it reads MKQALRVAFGFLILWASVLHA.

The protein belongs to the TolB family. As to quaternary structure, the Tol-Pal system is composed of five core proteins: the inner membrane proteins TolA, TolQ and TolR, the periplasmic protein TolB and the outer membrane protein Pal. They form a network linking the inner and outer membranes and the peptidoglycan layer.

Its subcellular location is the periplasm. In terms of biological role, part of the Tol-Pal system, which plays a role in outer membrane invagination during cell division and is important for maintaining outer membrane integrity. TolB occupies a key intermediary position in the Tol-Pal system because it communicates directly with both membrane-embedded components, Pal in the outer membrane and TolA in the inner membrane. This chain is Tol-Pal system protein TolB, found in Escherichia coli O139:H28 (strain E24377A / ETEC).